Reading from the N-terminus, the 289-residue chain is MKIAVYGKGGIGKSTTSCNISIALARRGKKVLQIGCDPKHDSTFTLTGFLIPTIIDTLQSKDYHYEDVWPEDVIYKGYGRCDCVEAGGPPAGAGCGGYVVGETVKLLKELNAFYEYDIILFDVLGDVVCGGFAAPLNYADYCIIITDNGFDALFAANRIAASVREKARTHPLRLAGLVGNRTSKRDLIDKYVEACPMPVLEVLPLIEDIRVSRVKGKTLFEMVELQPSLKYVCDFYLNIADQILSKPEGIIPKEVPDRELFSLLSDFYLNPVNTVNEKNKPNLIDFMII.

ATP contacts are provided by residues 10–15 (GIGKST) and Lys39. Ser14 is a Mg(2+) binding site. Positions 95 and 129 each coordinate [4Fe-4S] cluster. 180–181 (NR) contacts ATP.

The protein belongs to the NifH/BchL/ChlL family. In terms of assembly, homodimer. Protochlorophyllide reductase is composed of three subunits; ChlL, ChlN and ChlB. The cofactor is [4Fe-4S] cluster.

It is found in the plastid. The protein resides in the chloroplast. It carries out the reaction chlorophyllide a + oxidized 2[4Fe-4S]-[ferredoxin] + 2 ADP + 2 phosphate = protochlorophyllide a + reduced 2[4Fe-4S]-[ferredoxin] + 2 ATP + 2 H2O. It participates in porphyrin-containing compound metabolism; chlorophyll biosynthesis (light-independent). Its function is as follows. Component of the dark-operative protochlorophyllide reductase (DPOR) that uses Mg-ATP and reduced ferredoxin to reduce ring D of protochlorophyllide (Pchlide) to form chlorophyllide a (Chlide). This reaction is light-independent. The L component serves as a unique electron donor to the NB-component of the complex, and binds Mg-ATP. This chain is Light-independent protochlorophyllide reductase iron-sulfur ATP-binding protein, found in Marchantia polymorpha (Common liverwort).